The chain runs to 338 residues: MLSALARPAGAALRRSFSTSXQNNAKVAVLGASGGIGQPLSLLLKNSPLVSRLTLYDIAHTPGVAADLSHIETRATVKGYLGPEQLPDCLKGCDVVVIPAGVPRKPGMTRDDLFNTNATIVATLTAACAQHCPDAMICIISNPVNSTIPITAEVFKKHGVYNPNKIFGVTTLDIVRANAFVAELKGLDPARVSVPVIGGHAGKTIIPLISQCTPKVDFPQDQLSTLTGRIQEAGTEVVKAKAGAGSATLSMAYAGARFVFSLVDAMNGKEGVVECSFVKSQETDCPYFSTPLLLGKKGIEKNLGIGKISPFEEKMIAEAIPELKASIKKGEEFVKNMK.

The transit peptide at Met-1 to Asn-24 directs the protein to the mitochondrion. Residues Gly-31–Gly-37 and Asp-57 contribute to the NAD(+) site. The O-linked (GlcNAc) serine glycan is linked to Ser-33. An N6-acetyllysine; alternate mark is found at Lys-78 and Lys-91. An N6-succinyllysine; alternate mark is found at Lys-78 and Lys-91. Substrate-binding residues include Arg-104 and Arg-110. NAD(+)-binding positions include Asn-117 and Ile-140 to Asn-142. A substrate-binding site is contributed by Asn-142. The residue at position 165 (Lys-165) is an N6-acetyllysine. Arg-176 provides a ligand contact to substrate. Lys-185 bears the N6-acetyllysine; alternate mark. Lys-185 is subject to N6-succinyllysine; alternate. The active-site Proton acceptor is His-200. Lys-203 is modified (N6-succinyllysine). Residues Lys-215 and Lys-239 each carry the N6-acetyllysine; alternate modification. 2 positions are modified to N6-succinyllysine; alternate: Lys-215 and Lys-239. N6-malonyllysine; alternate is present on Lys-239. Position 246 is a phosphoserine (Ser-246). Met-251 contacts NAD(+). Lys-269 bears the N6-succinyllysine mark. N6-acetyllysine; alternate occurs at positions 296, 301, 307, 314, and 324. 5 positions are modified to N6-succinyllysine; alternate: Lys-296, Lys-301, Lys-307, Lys-314, and Lys-324. Lys-307 is subject to N6-malonyllysine; alternate. Ser-326 is subject to Phosphoserine. Residues Lys-328, Lys-329, and Lys-335 each carry the N6-acetyllysine; alternate modification. Lys-328 carries the post-translational modification N6-succinyllysine; alternate. Lys-329 carries the post-translational modification N6-malonyllysine; alternate. At Lys-335 the chain carries N6-succinyllysine; alternate.

It belongs to the LDH/MDH superfamily. MDH type 1 family. In terms of assembly, homodimer. In terms of processing, acetylation is enhanced after treatment either with trichostin A (TCA) or with nicotinamide (NAM) with the appearance of tri- and tetraacetylations. Glucose also increases acetylation.

It localises to the mitochondrion matrix. It carries out the reaction (S)-malate + NAD(+) = oxaloacetate + NADH + H(+). Enzyme activity is enhanced by acetylation. The sequence is that of Malate dehydrogenase, mitochondrial (MDH2) from Sus scrofa (Pig).